Reading from the N-terminus, the 475-residue chain is Protein nucleotidyltransferase YdiU (475 aa).

Residues Gly-82, Gly-84, Arg-85, Lys-105, Asp-117, Gly-118, Arg-168, and Arg-175 each contribute to the ATP site. Residue Asp-240 is the Proton acceptor of the active site. Mg(2+)-binding residues include Asn-241 and Asp-250. Asp-250 lines the ATP pocket.

This sequence belongs to the SELO family. The cofactor is Mg(2+). Mn(2+) serves as cofactor.

It carries out the reaction L-seryl-[protein] + ATP = 3-O-(5'-adenylyl)-L-seryl-[protein] + diphosphate. The enzyme catalyses L-threonyl-[protein] + ATP = 3-O-(5'-adenylyl)-L-threonyl-[protein] + diphosphate. The catalysed reaction is L-tyrosyl-[protein] + ATP = O-(5'-adenylyl)-L-tyrosyl-[protein] + diphosphate. It catalyses the reaction L-histidyl-[protein] + UTP = N(tele)-(5'-uridylyl)-L-histidyl-[protein] + diphosphate. It carries out the reaction L-seryl-[protein] + UTP = O-(5'-uridylyl)-L-seryl-[protein] + diphosphate. The enzyme catalyses L-tyrosyl-[protein] + UTP = O-(5'-uridylyl)-L-tyrosyl-[protein] + diphosphate. Its function is as follows. Nucleotidyltransferase involved in the post-translational modification of proteins. It can catalyze the addition of adenosine monophosphate (AMP) or uridine monophosphate (UMP) to a protein, resulting in modifications known as AMPylation and UMPylation. In Aeromonas hydrophila subsp. hydrophila (strain ATCC 7966 / DSM 30187 / BCRC 13018 / CCUG 14551 / JCM 1027 / KCTC 2358 / NCIMB 9240 / NCTC 8049), this protein is Protein nucleotidyltransferase YdiU.